Reading from the N-terminus, the 66-residue chain is Cold shock-like protein CspD (66 aa).

The region spanning 4-63 (GKVKWFNSEKGFGFIEVEGGDDVFVHFSAIQGDGFKTLEEGQEVSFEIVEGNRGPQAANV) is the CSD domain.

As to quaternary structure, homodimer.

It is found in the cytoplasm. The protein is Cold shock-like protein CspD (cspD) of Bacillus anthracis.